We begin with the raw amino-acid sequence, 63 residues long: Large ribosomal subunit protein bL28 (63 aa).

It belongs to the bacterial ribosomal protein bL28 family.

This is Large ribosomal subunit protein bL28 from Beutenbergia cavernae (strain ATCC BAA-8 / DSM 12333 / CCUG 43141 / JCM 11478 / NBRC 16432 / NCIMB 13614 / HKI 0122).